A 514-amino-acid chain; its full sequence is 2-isopropylmalate synthase (514 aa).

The 263-residue stretch at 5 to 267 folds into the Pyruvate carboxyltransferase domain; sequence IYIFDTTLRD…HTDIVTEEIT (263 aa). Mn(2+)-binding residues include Asp-14, His-202, His-204, and Asn-238. A regulatory domain region spans residues 392–514; the sequence is KLKYYQVFTG…SKDLQKISAN (123 aa).

This sequence belongs to the alpha-IPM synthase/homocitrate synthase family. LeuA type 1 subfamily. In terms of assembly, homodimer. Requires Mn(2+) as cofactor.

The protein resides in the cytoplasm. The catalysed reaction is 3-methyl-2-oxobutanoate + acetyl-CoA + H2O = (2S)-2-isopropylmalate + CoA + H(+). The protein operates within amino-acid biosynthesis; L-leucine biosynthesis; L-leucine from 3-methyl-2-oxobutanoate: step 1/4. Functionally, catalyzes the condensation of the acetyl group of acetyl-CoA with 3-methyl-2-oxobutanoate (2-ketoisovalerate) to form 3-carboxy-3-hydroxy-4-methylpentanoate (2-isopropylmalate). The protein is 2-isopropylmalate synthase of Clostridium kluyveri (strain NBRC 12016).